We begin with the raw amino-acid sequence, 345 residues long: tRNA-specific 2-thiouridylase MnmA (345 aa).

Residues 6-13 (LMSGGVDS) and L32 each bind ATP. The active-site Nucleophile is the C92. A disulfide bridge links C92 with C191. G116 is an ATP binding site. The interval 138–140 (KDQ) is interaction with tRNA. C191 acts as the Cysteine persulfide intermediate in catalysis. Residues 293–294 (RY) are interaction with tRNA.

Belongs to the MnmA/TRMU family.

It localises to the cytoplasm. It catalyses the reaction S-sulfanyl-L-cysteinyl-[protein] + uridine(34) in tRNA + AH2 + ATP = 2-thiouridine(34) in tRNA + L-cysteinyl-[protein] + A + AMP + diphosphate + H(+). Catalyzes the 2-thiolation of uridine at the wobble position (U34) of tRNA, leading to the formation of s(2)U34. In Helicobacter hepaticus (strain ATCC 51449 / 3B1), this protein is tRNA-specific 2-thiouridylase MnmA.